A 240-amino-acid chain; its full sequence is tRNA (guanine-N(7)-)-methyltransferase (240 aa).

Glu70, Glu95, Asp122, and Asp145 together coordinate S-adenosyl-L-methionine. Asp145 is an active-site residue. Substrate is bound by residues Lys149, Asp181, and Thr218–Glu221.

The protein belongs to the class I-like SAM-binding methyltransferase superfamily. TrmB family.

The enzyme catalyses guanosine(46) in tRNA + S-adenosyl-L-methionine = N(7)-methylguanosine(46) in tRNA + S-adenosyl-L-homocysteine. The protein operates within tRNA modification; N(7)-methylguanine-tRNA biosynthesis. In terms of biological role, catalyzes the formation of N(7)-methylguanine at position 46 (m7G46) in tRNA. This chain is tRNA (guanine-N(7)-)-methyltransferase, found in Pseudomonas entomophila (strain L48).